The chain runs to 110 residues: Large ribosomal subunit protein uL22 (110 aa).

This sequence belongs to the universal ribosomal protein uL22 family. In terms of assembly, part of the 50S ribosomal subunit.

Its function is as follows. This protein binds specifically to 23S rRNA; its binding is stimulated by other ribosomal proteins, e.g. L4, L17, and L20. It is important during the early stages of 50S assembly. It makes multiple contacts with different domains of the 23S rRNA in the assembled 50S subunit and ribosome. Functionally, the globular domain of the protein is located near the polypeptide exit tunnel on the outside of the subunit, while an extended beta-hairpin is found that lines the wall of the exit tunnel in the center of the 70S ribosome. The polypeptide is Large ribosomal subunit protein uL22 (Aliarcobacter butzleri (strain RM4018) (Arcobacter butzleri)).